Reading from the N-terminus, the 557-residue chain is MDIKRTVLWVIFFMSAVMLFDNWQRSHGRPSMFFPNVTQTNTASNATNGNGASGASAAAANALPAAATGAAPATTAPAAQAQLVRFSTDVYNGEIDTRGGTLAKLTLTKAGDGKQPDLSVTLFDNAANHTYLARTGLLGGDFPNHNDVYTQAAGPTSLAAGQNTLKLAFESPVKGGVKVVKTYTFTRGSYVIGVDTKIENVGTAPVTPSVYMELVRDNTSVETPMFSHTFLGPAVYTDQKHFQKITFSDIDKNKADYVTSADNGWIAMVQHYFASAWIPQQGAKRDIYVEKIDPTLYRVGVKQPVAAIAPGQSADVSARLFAGPEEERMLEGIAPGLELVKDYGWVTIIAKPLFWLLEKIHGFVGNWGWAIVLLTLLIKAVFFPLSAASYKSMARMKEITPRMQALRERFKSDPQKMNAALMELYKTEKVNPFGGCLPVVIQIPVFISLYWVLLASVEMRGAPWILWIHDLSQRDPYFILPVLMAVSMFVQTKLNPTPPDPVQAKMMMFMPIAFSVMFFFFPAGLVLYYVVNNVLSIAQQYYITRTLGAAAAKKKAS.

5 helical membrane passes run 3 to 23, 363 to 383, 437 to 457, 476 to 496, and 507 to 527; these read IKRTVLWVIFFMSAVMLFDNW, FVGNWGWAIVLLTLLIKAVFF, LPVVIQIPVFISLYWVLLASV, PYFILPVLMAVSMFVQTKLNP, and MMFMPIAFSVMFFFFPAGLVL.

It belongs to the OXA1/ALB3/YidC family. Type 1 subfamily. Interacts with the Sec translocase complex via SecD. Specifically interacts with transmembrane segments of nascent integral membrane proteins during membrane integration.

It localises to the cell inner membrane. Its function is as follows. Required for the insertion and/or proper folding and/or complex formation of integral membrane proteins into the membrane. Involved in integration of membrane proteins that insert both dependently and independently of the Sec translocase complex, as well as at least some lipoproteins. Aids folding of multispanning membrane proteins. This Burkholderia thailandensis (strain ATCC 700388 / DSM 13276 / CCUG 48851 / CIP 106301 / E264) protein is Membrane protein insertase YidC.